The chain runs to 551 residues: Glucans biosynthesis protein D (551 aa).

Positions 1–32 (MNRRRFIKGSMAMAAVCGSSGIASLFSQAAFA) form a signal peptide, tat-type signal.

This sequence belongs to the OpgD/OpgG family. In terms of processing, predicted to be exported by the Tat system. The position of the signal peptide cleavage has not been experimentally proven.

It is found in the periplasm. It functions in the pathway glycan metabolism; osmoregulated periplasmic glucan (OPG) biosynthesis. Functionally, probably involved in the control of the structural glucose backbone of osmoregulated periplasmic glucans (OPGs). This is Glucans biosynthesis protein D (mdoD) from Salmonella typhimurium (strain LT2 / SGSC1412 / ATCC 700720).